The sequence spans 90 residues: uncharacterized protein (90 aa).

A helical membrane pass occupies residues 32–52 (IIINLIPLVLLFAFFCPCIYF).

The protein resides in the membrane. This is an uncharacterized protein from Schizosaccharomyces pombe (strain 972 / ATCC 24843) (Fission yeast).